A 662-amino-acid polypeptide reads, in one-letter code: Polyunsaturated fatty acid (12S)/(13S)-lipoxygenase, epidermal-type (662 aa).

Positions 2 to 114 constitute a PLAT domain; that stretch reads GKYKILVVTG…TIYLPEGTAL (113 aa). One can recognise a Lipoxygenase domain in the interval 114–662; that stretch reads LKVNDDTKNL…PSMVENSVTI (549 aa). Residues His360, His365, His540, His544, and Ile662 each contribute to the Fe cation site.

This sequence belongs to the lipoxygenase family. Fe cation is required as a cofactor.

The protein resides in the cytoplasm. The enzyme catalyses (5Z,8Z,11Z,14Z)-eicosatetraenoate + O2 = (12S)-hydroperoxy-(5Z,8Z,10E,14Z)-eicosatetraenoate. It carries out the reaction 1-O-methyl-(9Z,12Z)-octadecadienoate + O2 = 1-O-methyl-(13S)-hydroperoxy-(9Z,11E)-octadecadienoate. It catalyses the reaction (8Z,11Z,14Z)-eicosatrienoate + O2 = (12S)-hydroperoxy-(8Z,10E,14Z)-eicosatrienoate. The catalysed reaction is (5Z,8Z,11Z)-eicosatrienoate + O2 = (12S)-hydroperoxy-(5Z,8Z,10E)-eicosatrienoate. The enzyme catalyses 1-O-methyl-(5Z,8Z,11Z,14Z)-eicosatetraenoate + O2 = 1-O-methyl-(12S)-hydroperoxy-(5Z,8Z,10E,14Z)-eicosatetraenoate. It carries out the reaction (9Z,12Z)-octadecadienoate + O2 = (13S)-hydroperoxy-(9Z,11E)-octadecadienoate. It catalyses the reaction (4Z,7Z,10Z,13Z,16Z,19Z)-docosahexaenoate + O2 = (14S)-hydroperoxy-(4Z,7Z,10Z,12E,16Z,19Z)-docosahexaenoate. It functions in the pathway lipid metabolism; hydroperoxy eicosatetraenoic acid biosynthesis. Its activity is regulated as follows. Arachidonate 12-lipoxygenase activity is decreased when the pH decreases from 7.4 to 6.0. Its function is as follows. Catalyzes the regio and stereo-specific incorporation of a single molecule of dioxygen into free and esterified polyunsaturated fatty acids generating lipid hydroperoxides that can be further reduced to the corresponding hydroxy species. Shows increasing catalytic activity within the series arachidonic acid &lt; 5,8,11-eicosatrienoic acid &lt; linoleic acid &lt; 8,11,14-eicosatrienoic acid. This is Polyunsaturated fatty acid (12S)/(13S)-lipoxygenase, epidermal-type from Rattus norvegicus (Rat).